Reading from the N-terminus, the 357-residue chain is Holliday junction branch migration complex subunit RuvB (357 aa).

Residues 4–195 are large ATPase domain (RuvB-L); that stretch reads TDKLAAKAVS…FGIVARLEFY (192 aa). ATP contacts are provided by residues Leu34, Arg35, Gly76, Lys79, Thr80, Thr81, 142 to 144, Arg185, Tyr195, and Arg232; that span reads EDY. Mg(2+) is bound at residue Thr80. The small ATPAse domain (RuvB-S) stretch occupies residues 196–266; that stretch reads TPAELAKIVT…VADAALAMLD (71 aa). The interval 269 to 357 is head domain (RuvB-H); the sequence is AVGFDLMDRK…PVRDLWDDNQ (89 aa). DNA-binding residues include Arg305, Arg324, and Arg329.

The protein belongs to the RuvB family. As to quaternary structure, homohexamer. Forms an RuvA(8)-RuvB(12)-Holliday junction (HJ) complex. HJ DNA is sandwiched between 2 RuvA tetramers; dsDNA enters through RuvA and exits via RuvB. An RuvB hexamer assembles on each DNA strand where it exits the tetramer. Each RuvB hexamer is contacted by two RuvA subunits (via domain III) on 2 adjacent RuvB subunits; this complex drives branch migration. In the full resolvosome a probable DNA-RuvA(4)-RuvB(12)-RuvC(2) complex forms which resolves the HJ.

It is found in the cytoplasm. It carries out the reaction ATP + H2O = ADP + phosphate + H(+). The RuvA-RuvB-RuvC complex processes Holliday junction (HJ) DNA during genetic recombination and DNA repair, while the RuvA-RuvB complex plays an important role in the rescue of blocked DNA replication forks via replication fork reversal (RFR). RuvA specifically binds to HJ cruciform DNA, conferring on it an open structure. The RuvB hexamer acts as an ATP-dependent pump, pulling dsDNA into and through the RuvAB complex. RuvB forms 2 homohexamers on either side of HJ DNA bound by 1 or 2 RuvA tetramers; 4 subunits per hexamer contact DNA at a time. Coordinated motions by a converter formed by DNA-disengaged RuvB subunits stimulates ATP hydrolysis and nucleotide exchange. Immobilization of the converter enables RuvB to convert the ATP-contained energy into a lever motion, pulling 2 nucleotides of DNA out of the RuvA tetramer per ATP hydrolyzed, thus driving DNA branch migration. The RuvB motors rotate together with the DNA substrate, which together with the progressing nucleotide cycle form the mechanistic basis for DNA recombination by continuous HJ branch migration. Branch migration allows RuvC to scan DNA until it finds its consensus sequence, where it cleaves and resolves cruciform DNA. The sequence is that of Holliday junction branch migration complex subunit RuvB from Ralstonia pickettii (strain 12J).